We begin with the raw amino-acid sequence, 295 residues long: Elongation factor Ts (295 aa).

The segment at 79–82 (TDFV) is involved in Mg(2+) ion dislocation from EF-Tu.

This sequence belongs to the EF-Ts family.

Its subcellular location is the cytoplasm. In terms of biological role, associates with the EF-Tu.GDP complex and induces the exchange of GDP to GTP. It remains bound to the aminoacyl-tRNA.EF-Tu.GTP complex up to the GTP hydrolysis stage on the ribosome. This Bacillus cereus (strain B4264) protein is Elongation factor Ts.